Reading from the N-terminus, the 148-residue chain is Large ribosomal subunit protein bL9 (148 aa).

Belongs to the bacterial ribosomal protein bL9 family.

Its function is as follows. Binds to the 23S rRNA. This is Large ribosomal subunit protein bL9 from Thermus thermophilus.